We begin with the raw amino-acid sequence, 1365 residues long: Killer toxin-resistance protein 5 (1365 aa).

The first 17 residues, 1 to 17 (MRLLALVLLLLCAPLRA), serve as a signal peptide directing secretion. 11 N-linked (GlcNAc...) asparagine glycosylation sites follow: Asn115, Asn228, Asn293, Asn457, Asn519, Asn523, Asn644, Asn870, Asn1091, Asn1150, and Asn1195. The interval 1334–1365 (FASSPGDEDVPGESVSSKYQDSDNAAPLHDEL) is disordered. Positions 1347 to 1356 (SVSSKYQDSD) are enriched in polar residues. A Prevents secretion from ER motif is present at residues 1362–1365 (HDEL).

It to D.melanogaster UGGG.

Its subcellular location is the endoplasmic reticulum lumen. Functionally, required for (1-&gt;6)-beta-D-glucan synthesis and normal cell growth. The protein is Killer toxin-resistance protein 5 (KRE5) of Saccharomyces cerevisiae (strain ATCC 204508 / S288c) (Baker's yeast).